Here is a 501-residue protein sequence, read N- to C-terminus: 7-alpha-hydroxycholest-4-en-3-one 12-alpha-hydroxylase (501 aa).

A helical membrane pass occupies residues 1-21 (MVLWGPVLGALLVVIAGYLCL). Residue serine 326 is modified to Phosphoserine. Cysteine 440 is a binding site for heme.

The protein belongs to the cytochrome P450 family. It depends on heme as a cofactor. Liver.

It localises to the endoplasmic reticulum membrane. It is found in the microsome membrane. The catalysed reaction is 7alpha-hydroxycholest-4-en-3-one + reduced [NADPH--hemoprotein reductase] + O2 = 7alpha,12alpha-dihydroxycholest-4-en-3-one + oxidized [NADPH--hemoprotein reductase] + H2O + H(+). The enzyme catalyses 5beta-cholestane-3alpha,7alpha-diol + reduced [NADPH--hemoprotein reductase] + O2 = 5beta-cholestane-3alpha,7alpha,12alpha-triol + oxidized [NADPH--hemoprotein reductase] + H2O + H(+). It carries out the reaction chenodeoxycholate + reduced [NADPH--hemoprotein reductase] + O2 = cholate + oxidized [NADPH--hemoprotein reductase] + H2O + H(+). It participates in lipid metabolism; bile acid biosynthesis. In terms of biological role, a cytochrome P450 monooxygenase involved in primary bile acid biosynthesis. Catalyzes the 12alpha-hydroxylation of 7alpha-hydroxy-4-cholesten-3-one, an intermediate metabolite in cholic acid biosynthesis. Controls biliary balance of cholic acid and chenodeoxycholic acid, ultimately regulating the intestinal absorption of dietary lipids. Mechanistically, uses molecular oxygen inserting one oxygen atom into a substrate, and reducing the second into a water molecule, with two electrons provided by NADPH via cytochrome P450 reductase (CPR; NADPH--hemoprotein reductase). This Homo sapiens (Human) protein is 7-alpha-hydroxycholest-4-en-3-one 12-alpha-hydroxylase.